The following is a 491-amino-acid chain: Anthranilate synthase component 1 (491 aa).

Residues S49 and P271 to L273 each bind L-tryptophan. G306–T307 provides a ligand contact to chorismate. Position 333 (E333) interacts with Mg(2+). Residues Y421, R441, G455 to G457, and G457 contribute to the chorismate site. A Mg(2+)-binding site is contributed by E470.

Belongs to the anthranilate synthase component I family. Heterotetramer consisting of two non-identical subunits: a beta subunit (TrpG) and a large alpha subunit (TrpE). Requires Mg(2+) as cofactor.

The catalysed reaction is chorismate + L-glutamine = anthranilate + pyruvate + L-glutamate + H(+). It participates in amino-acid biosynthesis; L-tryptophan biosynthesis; L-tryptophan from chorismate: step 1/5. Its activity is regulated as follows. Feedback inhibited by tryptophan. Its function is as follows. Part of a heterotetrameric complex that catalyzes the two-step biosynthesis of anthranilate, an intermediate in the biosynthesis of L-tryptophan. In the first step, the glutamine-binding beta subunit (TrpG) of anthranilate synthase (AS) provides the glutamine amidotransferase activity which generates ammonia as a substrate that, along with chorismate, is used in the second step, catalyzed by the large alpha subunit of AS (TrpE) to produce anthranilate. In the absence of TrpG, TrpE can synthesize anthranilate directly from chorismate and high concentrations of ammonia. In Neisseria gonorrhoeae (strain ATCC 700825 / FA 1090), this protein is Anthranilate synthase component 1 (trpE).